The chain runs to 345 residues: Trace amine-associated receptor 6 (345 aa).

Residues 1–32 lie on the Extracellular side of the membrane; sequence MGSNSSPPAVLQLCYENVNGSCVKTPYSPGPR. An N-linked (GlcNAc...) asparagine glycan is attached at Asn19. Cystine bridges form between Cys22/Cys186 and Cys105/Cys190. A helical membrane pass occupies residues 33-53; sequence VLLYAVFGFGAVLAVFGNLLV. Topologically, residues 54 to 68 are cytoplasmic; it reads MISILHFKQLHSPTN. Residues 69–89 form a helical membrane-spanning segment; the sequence is FLIASLACADFWVGVSVMPFS. At 90-107 the chain is on the extracellular side; that stretch reads MVRSIESCWYFGRSFCTF. The helical transmembrane segment at 108-128 threads the bilayer; it reads HTCCDVAFCYSSLFHLSFISI. Residues 129–147 are Cytoplasmic-facing; that stretch reads DRYIAVTDPLVYPTKFTVS. A helical membrane pass occupies residues 148-168; sequence VSGICISISWILPLAYSGAVF. Topologically, residues 169–202 are extracellular; that stretch reads YTGVYADGLEEVSDAVNCVGGCQVVVNQNWVLID. The chain crosses the membrane as a helical span at residues 203–223; that stretch reads FLSFLIPTLVMIILYGNIFLV. Topologically, residues 224-259 are cytoplasmic; sequence ARQQAKKIETVGNKAESSSESYKARVARRERKAAKT. Residues 260 to 276 form a helical membrane-spanning segment; that stretch reads LGITVVAFMISWLPYSI. At 277–282 the chain is on the extracellular side; sequence DSLVDA. A helical membrane pass occupies residues 283 to 302; the sequence is FMGFITPAYIYEICVWCAYY. Topologically, residues 303–345 are cytoplasmic; that stretch reads NSAMNPLIYALFYPWFKKAIKVIMSGQVFKNSSATMNLFSEQI.

It belongs to the G-protein coupled receptor 1 family.

It is found in the cell membrane. Functionally, olfactory receptor specific for trace amines, such as beta-phenylethylamine (beta-PEA). Trace amine compounds are enriched in animal body fluids and act on trace amine-associated receptors (TAARs) to elicit both intraspecific and interspecific innate behaviors. Beta-PEA-binding causes a conformation change that triggers signaling via G(s)-class of G alpha proteins (GNAL or GNAS). This Rattus norvegicus (Rat) protein is Trace amine-associated receptor 6 (Taar6).